The sequence spans 265 residues: Tyrosine protein kinase-interacting protein (265 aa).

Over residues 1 to 14 (MANEGEEIELTEFP) the composition is skewed to acidic residues. The interval 1-49 (MANEGEEIELTEFPETEKERKDEEKLSSCSEETTDTSSSSSSDHVPAPI) is disordered. At 1-238 (MANEGEEIEL…LKRLENKVNA (238 aa)) the chain is on the cytoplasmic side. A compositionally biased stretch (basic and acidic residues) spans 15–26 (ETEKERKDEEKL). The span at 27-43 (SSCSEETTDTSSSSSSD) shows a compositional bias: low complexity. Tyr123 bears the Phosphotyrosine; by host LCK mark. Residue Tyr136 is modified to Phosphotyrosine; by host. The CSKH/LBD2 stretch occupies residues 155–164 (EDLQSFLEKY). The tract at residues 172–192 (KRDLSATWDPGMPTPALPPRP) is disordered. The segment at 183–192 (MPTPALPPRP) is SH3B/LBD1. The segment covering 183 to 192 (MPTPALPPRP) has biased composition (pro residues). The tract at residues 225–234 (IVKDLKRLEN) is SH3 binding. The chain crosses the membrane as a helical span at residues 239–259 (IICLVVVILAVLLLVTVLSIL). The Extracellular segment spans residues 260–265 (HIGMKS).

Binds host LCK, human WDR48 and human NXF1/TAP. Forms a complex with activated LCK and STAT1 and STAT3. Post-translationally, phosphorylation on Tyr-123 acts as a docking site for the recruitment of STATs 1 and 3.

The protein resides in the host cell membrane. In terms of biological role, plays a critical role in virus induced T-cell transformation. Binds to T-cell-specific tyrosine kinase LCK SH2 and SH3 domains, thereby activating its kinase activity. Once phosphorylated by host LCK, forms a complex with at least STAT 1 and 3, resulting on the phosphorylation of STAT3 and presumably STAT1, and their migration into the nucleus to induce transcription of target genes. Stimulates host ILF3/NF-AT-90 activity. Association with host NXF1/TAP transduces the signal up-regulating surface expression of adhesion molecules as well as activating NF-kappa-B activity. Acts synergistically with StpC to stimulate NF-kappa-B activity and interleukin-2 gene expression. Activation of NF-kappa-B protects lymphocytes from apoptosis, thereby facilitating viral induced cell transformation. May cause down-regulation of host LCK and cell apoptosis when stably overexpressed ex vivo. Interaction with WDR48 induce degradation of T-cell receptor in a lysosome-dependent fashion, when both proteins are overexpressed. The biological effect of this interaction remains controversial since no T-cell receptor degradation is observed in infected cells. This chain is Tyrosine protein kinase-interacting protein, found in Saimiriine herpesvirus 2 (strain 484) (SaHV-2).